The sequence spans 102 residues: NADH-quinone oxidoreductase subunit K 2 (102 aa).

A run of 3 helical transmembrane segments spans residues 5–25 (FEHV…CVLV), 30–50 (LIML…AFVG), and 65–85 (LIIM…VVYL).

Belongs to the complex I subunit 4L family. NDH-1 is composed of 14 different subunits. Subunits NuoA, H, J, K, L, M, N constitute the membrane sector of the complex.

The protein localises to the cell inner membrane. The enzyme catalyses a quinone + NADH + 5 H(+)(in) = a quinol + NAD(+) + 4 H(+)(out). Its function is as follows. NDH-1 shuttles electrons from NADH, via FMN and iron-sulfur (Fe-S) centers, to quinones in the respiratory chain. The immediate electron acceptor for the enzyme in this species is believed to be ubiquinone. Couples the redox reaction to proton translocation (for every two electrons transferred, four hydrogen ions are translocated across the cytoplasmic membrane), and thus conserves the redox energy in a proton gradient. This chain is NADH-quinone oxidoreductase subunit K 2, found in Geobacter sulfurreducens (strain ATCC 51573 / DSM 12127 / PCA).